The chain runs to 291 residues: Co-chaperone protein DjlA (291 aa).

Residues 1–6 (MRYWGK) are Periplasmic-facing. The helical transmembrane segment at 7 to 31 (LLGLALGIVSSTGIWGMIMGLLMGH) threads the bilayer. Over 32-291 (WIDRARASRR…ELLKSANQTK (260 aa)) the chain is Cytoplasmic. The interval 177 to 223 (ESPTGQQSRQNQSRQNGKSQQRRNNGYSNGHSYGGQRPPSPLRGPTV) is disordered. Positions 181–211 (GQQSRQNQSRQNGKSQQRRNNGYSNGHSYGG) are enriched in low complexity. In terms of domain architecture, J spans 225–291 (SACRTLGVRS…ELLKSANQTK (67 aa)).

In terms of assembly, homodimer.

It localises to the cell inner membrane. In terms of biological role, regulatory DnaK co-chaperone. Direct interaction between DnaK and DjlA is needed for the induction of the wcaABCDE operon, involved in the synthesis of a colanic acid polysaccharide capsule, possibly through activation of the RcsB/RcsC phosphotransfer signaling pathway. The colanic acid capsule may help the bacterium survive conditions outside the host. In Pectobacterium atrosepticum (strain SCRI 1043 / ATCC BAA-672) (Erwinia carotovora subsp. atroseptica), this protein is Co-chaperone protein DjlA.